The following is a 1138-amino-acid chain: 2'-5'-oligoadenylate synthase 3 (1138 aa).

N-acetylmethionine is present on Met-1. Positions 6 to 341 (TPAGALDKLV…GVLVQPWEGP (336 aa)) are OAS domain 1. Interaction with dsRNA regions lie at residues 12–56 (DKLV…VIRI) and 185–199 (EPRKNFVNTRPAKLK). Positions 342–462 (GLPRAGILDL…GSRMSPDLSQ (121 aa)) are linker. A compositionally biased stretch (basic and acidic residues) spans 370–379 (LAVQSKERSQ). Disordered regions lie at residues 370 to 403 (LAVQSKERSQKPSNSAPGFPEAATKIPAMPNPSA) and 434 to 459 (TQSTASSHMPPDRSSISTAGSRMSPD). Over residues 447–459 (SSISTAGSRMSPD) the composition is skewed to polar residues. OAS domain regions lie at residues 463-793 (IPSK…PWDV) and 801-1135 (TLAE…WPVK). An ATP-binding site is contributed by Ser-855. Asp-867, Asp-869, and Asp-939 together coordinate Mg(2+). The ATP site is built by Arg-998, Lys-1001, and Gln-1020.

It belongs to the 2-5A synthase family. Monomer. Mg(2+) serves as cofactor. In terms of tissue distribution, intestine.

Its subcellular location is the cytoplasm. It is found in the nucleus. The catalysed reaction is 3 ATP = 5'-triphosphoadenylyl-(2'-&gt;5')-adenylyl-(2'-&gt;5')-adenosine + 2 diphosphate. Produced as a latent enzyme which is activated by dsRNA generated during the course of viral infection. Strongly activated by long dsRNAs at least 50 nucleotides in length. ssRNA does not activate the enzyme. Functionally, interferon-induced, dsRNA-activated antiviral enzyme which plays a critical role in cellular innate antiviral response. In addition, it may also play a role in other cellular processes such as apoptosis, cell growth, differentiation and gene regulation. Synthesizes preferentially dimers of 2'-5'-oligoadenylates (2-5A) from ATP which then bind to the inactive monomeric form of ribonuclease L (RNase L) leading to its dimerization and subsequent activation. Activation of RNase L leads to degradation of cellular as well as viral RNA, resulting in the inhibition of protein synthesis, thus terminating viral replication. Can mediate the antiviral effect via the classical RNase L-dependent pathway or an alternative antiviral pathway independent of RNase L. This Mus musculus (Mouse) protein is 2'-5'-oligoadenylate synthase 3 (Oas3).